Consider the following 424-residue polypeptide: Serine--tRNA ligase (424 aa).

Position 229-231 (229-231 (TAE)) interacts with L-serine. Position 260 to 262 (260 to 262 (RSE)) interacts with ATP. An L-serine-binding site is contributed by glutamate 283. ATP is bound at residue 347–350 (EISS). Residue serine 383 participates in L-serine binding.

Belongs to the class-II aminoacyl-tRNA synthetase family. Type-1 seryl-tRNA synthetase subfamily. Homodimer. The tRNA molecule binds across the dimer.

The protein resides in the cytoplasm. The catalysed reaction is tRNA(Ser) + L-serine + ATP = L-seryl-tRNA(Ser) + AMP + diphosphate + H(+). It carries out the reaction tRNA(Sec) + L-serine + ATP = L-seryl-tRNA(Sec) + AMP + diphosphate + H(+). Its pathway is aminoacyl-tRNA biosynthesis; selenocysteinyl-tRNA(Sec) biosynthesis; L-seryl-tRNA(Sec) from L-serine and tRNA(Sec): step 1/1. Its function is as follows. Catalyzes the attachment of serine to tRNA(Ser). Is also able to aminoacylate tRNA(Sec) with serine, to form the misacylated tRNA L-seryl-tRNA(Sec), which will be further converted into selenocysteinyl-tRNA(Sec). The sequence is that of Serine--tRNA ligase from Gluconacetobacter diazotrophicus (strain ATCC 49037 / DSM 5601 / CCUG 37298 / CIP 103539 / LMG 7603 / PAl5).